Here is a 389-residue protein sequence, read N- to C-terminus: Sterol methyltransferase-like 1 (389 aa).

Residues 25–45 (IAAGVTAAVVIGGYIWIITEL) form a helical membrane-spanning segment.

It belongs to the class I-like SAM-binding methyltransferase superfamily. Erg6/SMT family.

It localises to the microsome membrane. Its function is as follows. Unable to convert squalene, botryococcene, cycloartenol, zymosterol or lanosterol to mono-, di-, tri- or tetramethylated derivatives. The polypeptide is Sterol methyltransferase-like 1 (SMT-1) (Botryococcus braunii (Green alga)).